The primary structure comprises 249 residues: tRNA pseudouridine synthase A (249 aa).

D52 functions as the Nucleophile in the catalytic mechanism. Residue Y111 participates in substrate binding.

The protein belongs to the tRNA pseudouridine synthase TruA family. In terms of assembly, homodimer.

The enzyme catalyses uridine(38/39/40) in tRNA = pseudouridine(38/39/40) in tRNA. Functionally, formation of pseudouridine at positions 38, 39 and 40 in the anticodon stem and loop of transfer RNAs. The chain is tRNA pseudouridine synthase A from Brachyspira hyodysenteriae (strain ATCC 49526 / WA1).